The sequence spans 558 residues: Urease subunit alpha 2 (558 aa).

In terms of domain architecture, Urease spans 129 to 558 (GAVDTHVHLL…SVSLNRLYFL (430 aa)). Residues His134, His136, and Lys214 each contribute to the Ni(2+) site. Lys214 is modified (N6-carboxylysine). His216 is a substrate binding site. Ni(2+) contacts are provided by His243 and His269. Residue His317 is the Proton donor of the active site. Ni(2+) is bound at residue Asp357.

It belongs to the metallo-dependent hydrolases superfamily. Urease alpha subunit family. May form a heterohexamer of 3 UreC (alpha) and 3 UreAB (gamma/beta) subunits. May also form a heterotrimer of UreA (gamma), UreB (beta) and UreC (alpha) subunits. Three heterotrimers associate to form the active enzyme. It depends on Ni cation as a cofactor. Carboxylation allows a single lysine to coordinate two nickel ions.

The protein localises to the cytoplasm. It carries out the reaction urea + 2 H2O + H(+) = hydrogencarbonate + 2 NH4(+). The protein operates within nitrogen metabolism; urea degradation; CO(2) and NH(3) from urea (urease route): step 1/1. The protein is Urease subunit alpha 2 of Streptomyces coelicolor (strain ATCC BAA-471 / A3(2) / M145).